We begin with the raw amino-acid sequence, 146 residues long: MKTYAQKASEVQRDWYVIDATNQTLGRLATQIATLLRGKHKPTFSPYIDGGDFVIVVNAERIRLTGRKPEQKMYYRHSNYPGGFKAVSFKQLIARHPERVLRFAVKGMLPKTRLGRRQLAKLKIYAGPKHPHAAQQPKVYEPRPRG.

A disordered region spans residues 126–146; that stretch reads AGPKHPHAAQQPKVYEPRPRG.

This sequence belongs to the universal ribosomal protein uL13 family. In terms of assembly, part of the 50S ribosomal subunit.

In terms of biological role, this protein is one of the early assembly proteins of the 50S ribosomal subunit, although it is not seen to bind rRNA by itself. It is important during the early stages of 50S assembly. The polypeptide is Large ribosomal subunit protein uL13 (Roseiflexus castenholzii (strain DSM 13941 / HLO8)).